A 180-amino-acid chain; its full sequence is MDNIAILEALLYTSGDEGLEQKQIIDILDINLNQLEDLVSKYHSHGLTIQRYGSTYVLTTKKETSTYIEQLVKEKSKMKLSQAAMETLSIIAYNQPLTRGDIEMIRGINSDGAVKTLIARGLVEAKDVDHSRSHHLITTDLFLNVFGIENLDALPTTEEDEAEMDEFFSNLVNQKGESNE.

This sequence belongs to the ScpB family. In terms of assembly, homodimer. Homodimerization may be required to stabilize the binding of ScpA to the Smc head domains. Component of a cohesin-like complex composed of ScpA, ScpB and the Smc homodimer, in which ScpA and ScpB bind to the head domain of Smc. The presence of the three proteins is required for the association of the complex with DNA.

It is found in the cytoplasm. Functionally, participates in chromosomal partition during cell division. May act via the formation of a condensin-like complex containing Smc and ScpA that pull DNA away from mid-cell into both cell halves. In Staphylococcus epidermidis (strain ATCC 35984 / DSM 28319 / BCRC 17069 / CCUG 31568 / BM 3577 / RP62A), this protein is Segregation and condensation protein B.